Consider the following 689-residue polypeptide: Glycine--tRNA ligase beta subunit (689 aa).

Belongs to the class-II aminoacyl-tRNA synthetase family. In terms of assembly, tetramer of two alpha and two beta subunits.

It is found in the cytoplasm. The enzyme catalyses tRNA(Gly) + glycine + ATP = glycyl-tRNA(Gly) + AMP + diphosphate. The polypeptide is Glycine--tRNA ligase beta subunit (Shewanella halifaxensis (strain HAW-EB4)).